The following is a 335-amino-acid chain: Homeobox protein unc-39 (335 aa).

Disordered stretches follow at residues 27-56 (FTSS…GGPP) and 269-294 (RRQR…NGGS). Residues 28–41 (TSSSNSNTSNSSTS) are compositionally biased toward low complexity. Positions 42 to 53 (PSHISDQFSSSG) are enriched in polar residues. The segment at residues 225–277 (KDSSRKFLKQFFRNVSEYPTQEQKREISRATGLKIVQISNWFKNRRQRDKSNN) is a DNA-binding region (homeobox). Residues 276-294 (NNSAKCSPPSSSSSTNGGS) are compositionally biased toward low complexity.

The protein belongs to the SIX/Sine oculis homeobox family.

Its subcellular location is the nucleus. Probable transcription factor required for differentiation and migration of neuronal cells, such as RID and CAN neurons. Specifically, plays a role in the terminal differentiation of RID peptidergic neurons. Also required for CAN neuron axon guidance. In Caenorhabditis elegans, this protein is Homeobox protein unc-39.